We begin with the raw amino-acid sequence, 817 residues long: Probable beta-glucosidase G (817 aa).

Residues 1-20 (MASIAHLIFSGLLAATVANS) form the signal peptide. N-linked (GlcNAc...) asparagine glycans are attached at residues Asn40, Asn58, Asn229, and Asn276. Asp304 is a catalytic residue. N-linked (GlcNAc...) asparagine glycans are attached at residues Asn343, Asn350, Asn402, Asn507, Asn563, Asn584, Asn623, Asn662, Asn679, and Asn715.

The protein belongs to the glycosyl hydrolase 3 family.

It is found in the secreted. The catalysed reaction is Hydrolysis of terminal, non-reducing beta-D-glucosyl residues with release of beta-D-glucose.. It participates in glycan metabolism; cellulose degradation. In terms of biological role, beta-glucosidases are one of a number of cellulolytic enzymes involved in the degradation of cellulosic biomass. Catalyzes the last step releasing glucose from the inhibitory cellobiose. This chain is Probable beta-glucosidase G (bglG), found in Neosartorya fischeri (strain ATCC 1020 / DSM 3700 / CBS 544.65 / FGSC A1164 / JCM 1740 / NRRL 181 / WB 181) (Aspergillus fischerianus).